The primary structure comprises 92 residues: MLCAVYKSSRKADTYLFVNKRDCFDDVPQALLDMFGVPQLVMVFPIVKRESLGIADINKVRAALEEKGFYLQIPPPQVNLLAEHRENLGIKD.

The 85-residue stretch at 1–85 folds into the YcgL domain; it reads MLCAVYKSSR…PQVNLLAEHR (85 aa).

This chain is YcgL domain-containing protein SO_2575, found in Shewanella oneidensis (strain ATCC 700550 / JCM 31522 / CIP 106686 / LMG 19005 / NCIMB 14063 / MR-1).